The primary structure comprises 151 residues: Linear element protein Mug20 (151 aa).

A coiled-coil region spans residues 56–140; sequence EEKLRALDKL…CAMEKLKMIE (85 aa).

As to quaternary structure, component of linear elements (LinEs), which are similar to synaptonemal complexes, at least composed of rec27, rec25, rec10 and mug20. Interacts with rec10.

The protein resides in the cytoplasm. The protein localises to the nucleus. It localises to the chromosome. During meiotic DNA recombination, binds to and may help activate DNA double-strand break (DSB) hotspot sites. This is Linear element protein Mug20 from Schizosaccharomyces pombe (strain 972 / ATCC 24843) (Fission yeast).